The chain runs to 315 residues: MGIWLNESSVDGFILLGIFSQSQTDLLLFSTVMLVFTVALCGNVLLILLIYTDPRLHTPMYFFLSQLSLMDLMLVCNIVPKMAVNFLSGRKSISFAGCGIQIGFFVSLVGSEGLLLGLMAYDRYVAISHPLHYPILMSQKVCLQIAGSSWAFGILDGIIQMVAAMSLPYCGSRYIDHFFCEVPALLKLACADTSLFDTLLFACCVFMLLLPFSIIVTSYARILGAVLRMHSAQSRKKALATCSSHLTAVSLFYGAAMFIYLRPRRYRAPSHDKVVSIFYTVLTPMLNPLIYSLRNREVMGALRKGLDRCRVGSQH.

The next 7 helical transmembrane spans lie at 31–51, 59–79, 100–120, 145–165, 196–216, 239–259, and 273–293; these read TVML…LLIY, PMYF…CNIV, IQIG…GLMA, IAGS…VAAM, FDTL…SIIV, LATC…AMFI, and KVVS…IYSL. A disulfide bridge connects residues Cys98 and Cys180.

It belongs to the G-protein coupled receptor 1 family.

The protein resides in the cell membrane. Odorant receptor. Activated by (+) and (-)-limonene. In Mus musculus (Mouse), this protein is Olfactory receptor 2V1.